Consider the following 322-residue polypeptide: Phosphatidylserine decarboxylase proenzyme (322 aa).

Catalysis depends on charge relay system; for autoendoproteolytic cleavage activity residues Asp90, His147, and Ser254. Residue Ser254 is the Schiff-base intermediate with substrate; via pyruvic acid; for decarboxylase activity of the active site. A Pyruvic acid (Ser); by autocatalysis modification is found at Ser254. Positions 294–322 are disordered; that stretch reads EAEPAPLPEEEINAEHDASPLVDDKKDES. Positions 306-322 are enriched in basic and acidic residues; that stretch reads NAEHDASPLVDDKKDES.

The protein belongs to the phosphatidylserine decarboxylase family. PSD-B subfamily. Prokaryotic type I sub-subfamily. Heterodimer of a large membrane-associated beta subunit and a small pyruvoyl-containing alpha subunit. It depends on pyruvate as a cofactor. Post-translationally, is synthesized initially as an inactive proenzyme. Formation of the active enzyme involves a self-maturation process in which the active site pyruvoyl group is generated from an internal serine residue via an autocatalytic post-translational modification. Two non-identical subunits are generated from the proenzyme in this reaction, and the pyruvate is formed at the N-terminus of the alpha chain, which is derived from the carboxyl end of the proenzyme. The autoendoproteolytic cleavage occurs by a canonical serine protease mechanism, in which the side chain hydroxyl group of the serine supplies its oxygen atom to form the C-terminus of the beta chain, while the remainder of the serine residue undergoes an oxidative deamination to produce ammonia and the pyruvoyl prosthetic group on the alpha chain. During this reaction, the Ser that is part of the protease active site of the proenzyme becomes the pyruvoyl prosthetic group, which constitutes an essential element of the active site of the mature decarboxylase.

Its subcellular location is the cell membrane. The enzyme catalyses a 1,2-diacyl-sn-glycero-3-phospho-L-serine + H(+) = a 1,2-diacyl-sn-glycero-3-phosphoethanolamine + CO2. Its pathway is phospholipid metabolism; phosphatidylethanolamine biosynthesis; phosphatidylethanolamine from CDP-diacylglycerol: step 2/2. Catalyzes the formation of phosphatidylethanolamine (PtdEtn) from phosphatidylserine (PtdSer). The chain is Phosphatidylserine decarboxylase proenzyme from Citrobacter koseri (strain ATCC BAA-895 / CDC 4225-83 / SGSC4696).